Reading from the N-terminus, the 435-residue chain is Putative BTB/POZ domain-containing protein L275 (435 aa).

The BTB domain maps to 80–149 (YDGYVYINVG…IKGKQNDNHN (70 aa)).

Belongs to the mimivirus BTB/WD family.

The chain is Putative BTB/POZ domain-containing protein L275 from Acanthamoeba polyphaga mimivirus (APMV).